Reading from the N-terminus, the 702-residue chain is MEQEKHVFSIDWAGRPLTVEIGELAKQANGAVLVRYGDTVVLSTATASKEPKSVDFFPLTVNYEERLYAVGKIPGGFIKREGRPSEKAILASRLIDRPIRPLFAEGFRNEVQVVSMVMSVDQDCSPEMAAMFGSSLALTISDIPFEGPIAGVTVGRVDGKFVINPSVAQMEQSDMHLVVAGTKDAINMVEAGANEVPEEVMLEAIMFGHEEIKRLIAFQEDIAAKVGKEKMEVVLYELNAELEAEIRARVEGEVKRAVQVPEKLAREAAIEQLKAEVVAAYEEQEADEETLKQVKEILYKLVKEEVRRLITEEKVRPDGRKVDEIRPLSSAVGLLPRTHGSGLFTRGQTQALSVCTLGALGDVQILDGLGIEETKRFMHHYNFPPFSVGETGAMRGPGRREIGHGALGERALEPVIPSEKEFPYTIRLVSEVLESNGSTSQASICASTLAMMDAGVPIKAPVAGIAMGLVKSGEHYTILTDIQGMEDHLGDMDFKVAGTEKGVTALQMDIKIKGLSREILEEALQQARKGRLEILKHMMQTISEPRKELSPYAPKILTMQINPDKIRDVIGPSGKQINKIIEETGVKIDIEQDGTIFISSVNEEMNKKAKKIIEDIVREVEVGQVYLGKVKRIEKFGAFVELFSGKDGLVHISELAEERVGKVEDVVSIGDEILVKVTEIDKQGRVNLSRKAVLRDQKEAEQ.

2 residues coordinate Mg(2+): Asp487 and Asp493. The region spanning 554–613 is the KH domain; sequence PKILTMQINPDKIRDVIGPSGKQINKIIEETGVKIDIEQDGTIFISSVNEEMNKKAKKII. Residues 623-691 enclose the S1 motif domain; sequence GQVYLGKVKR…KQGRVNLSRK (69 aa).

Belongs to the polyribonucleotide nucleotidyltransferase family. Mg(2+) is required as a cofactor.

Its subcellular location is the cytoplasm. It carries out the reaction RNA(n+1) + phosphate = RNA(n) + a ribonucleoside 5'-diphosphate. In terms of biological role, involved in mRNA degradation. Catalyzes the phosphorolysis of single-stranded polyribonucleotides processively in the 3'- to 5'-direction. The polypeptide is Polyribonucleotide nucleotidyltransferase (Anoxybacillus flavithermus (strain DSM 21510 / WK1)).